The primary structure comprises 259 residues: Ribonuclease HII (259 aa).

Residues 70 to 258 (TLIAGIDEVG…VKSLVLGKKE (189 aa)) form the RNase H type-2 domain. Residues aspartate 76, glutamate 77, and aspartate 168 each coordinate a divalent metal cation.

This sequence belongs to the RNase HII family. Mn(2+) serves as cofactor. It depends on Mg(2+) as a cofactor.

The protein resides in the cytoplasm. The catalysed reaction is Endonucleolytic cleavage to 5'-phosphomonoester.. Endonuclease that specifically degrades the RNA of RNA-DNA hybrids. This is Ribonuclease HII from Streptococcus pneumoniae (strain Taiwan19F-14).